The sequence spans 256 residues: Ribosomal RNA small subunit methyltransferase J (256 aa).

Residues 101–102, 117–118, 153–154, and Asp-176 contribute to the S-adenosyl-L-methionine site; these read RD, ER, and SS.

It belongs to the methyltransferase superfamily. RsmJ family.

The protein localises to the cytoplasm. The catalysed reaction is guanosine(1516) in 16S rRNA + S-adenosyl-L-methionine = N(2)-methylguanosine(1516) in 16S rRNA + S-adenosyl-L-homocysteine + H(+). Functionally, specifically methylates the guanosine in position 1516 of 16S rRNA. The sequence is that of Ribosomal RNA small subunit methyltransferase J from Photobacterium profundum (strain SS9).